A 633-amino-acid chain; its full sequence is Threonine--tRNA ligase (633 aa).

Residues 1–61 enclose the TGS domain; sequence MINVYFSDNS…TEDCKFEVIT (61 aa). The tract at residues 242–533 is catalytic; sequence DHRKIGKELE…LIEHHSGKLP (292 aa). The Zn(2+) site is built by cysteine 333, histidine 384, and histidine 510.

This sequence belongs to the class-II aminoacyl-tRNA synthetase family. As to quaternary structure, homodimer. Zn(2+) serves as cofactor.

The protein resides in the cytoplasm. It catalyses the reaction tRNA(Thr) + L-threonine + ATP = L-threonyl-tRNA(Thr) + AMP + diphosphate + H(+). In terms of biological role, catalyzes the attachment of threonine to tRNA(Thr) in a two-step reaction: L-threonine is first activated by ATP to form Thr-AMP and then transferred to the acceptor end of tRNA(Thr). Also edits incorrectly charged L-seryl-tRNA(Thr). The sequence is that of Threonine--tRNA ligase from Ehrlichia ruminantium (strain Welgevonden).